The sequence spans 859 residues: Villin-like protein (859 aa).

Gelsolin-like repeat units lie at residues 24-76 (LKML…EARE), 148-188 (VSAT…SEKA), 264-308 (LVVQ…QEKK), 401-450 (LQRQ…EDTK), 521-561 (TRTM…DQRE), and 624-665 (LVLT…WKKE). The HP domain occupies 793–859 (SMVNGSLPRE…QQAKKKLGFF (67 aa)).

It belongs to the villin/gelsolin family.

In terms of biological role, possible tumor suppressor. This is Villin-like protein from Mus musculus (Mouse).